A 456-amino-acid chain; its full sequence is MQLEDTIAAIATAIVPQQGSIGVVRLSGPQSLTIAKTLFDAPGNQTWESHRILYGHVRHPQTKAAIDEALLLLMLAPRSYTKEDVVEFQCHGGIMPVQQVLQLCLQQGARLAQPGEFSFRAFLNGRLDLTQAESISELVGAQSPQAAAIALAGLQGKLAQPIRDLRNTCLDILAEVEARIDFEDDLPPLDEDSIRQQLQNLYQQLEDILNTAQRGELLRTGLKVAIVGQPNVGKSSLLNAWSRTDRAIVTDLPGTTRDVVESQLVVEGIPIQVLDTAGIRETADQVEQIGVERSRKAAQQADLVLLTVDAHQGWTEADQLIYEQVKDRPLILVINKIDLGRADLVSYPPEITNTVLTAAAANLGIEALENAIIEQVNQTNLSPQNLDFAINQRQEAVLTEAQLALKQLQQTMAEQLPLDFWTIDLRLAINALGQVTGETVTESVLDRIFSRFCIGK.

(6S)-5-formyl-5,6,7,8-tetrahydrofolate contacts are provided by Arg25, Glu87, and Arg126. The 157-residue stretch at 221–377 folds into the TrmE-type G domain; it reads GLKVAIVGQP…LENAIIEQVN (157 aa). A K(+)-binding site is contributed by Asn231. Residues 231–236, 250–256, and 275–278 contribute to the GTP site; these read NVGKSS, TDLPGTT, and DTAG. Ser235 contributes to the Mg(2+) binding site. 3 residues coordinate K(+): Thr250, Leu252, and Thr255. Thr256 is a binding site for Mg(2+). Lys456 is a (6S)-5-formyl-5,6,7,8-tetrahydrofolate binding site.

It belongs to the TRAFAC class TrmE-Era-EngA-EngB-Septin-like GTPase superfamily. TrmE GTPase family. In terms of assembly, homodimer. Heterotetramer of two MnmE and two MnmG subunits. K(+) serves as cofactor.

It is found in the cytoplasm. In terms of biological role, exhibits a very high intrinsic GTPase hydrolysis rate. Involved in the addition of a carboxymethylaminomethyl (cmnm) group at the wobble position (U34) of certain tRNAs, forming tRNA-cmnm(5)s(2)U34. This Synechocystis sp. (strain ATCC 27184 / PCC 6803 / Kazusa) protein is tRNA modification GTPase MnmE.